We begin with the raw amino-acid sequence, 561 residues long: Probable galacturonosyltransferase 9 (561 aa).

At 1–27 (MAVAFRGGRGGVGSGQSTGLRSFFSYR) the chain is on the cytoplasmic side. A helical; Signal-anchor for type II membrane protein transmembrane segment spans residues 28–48 (IFISALFSFLFLATFSVVLNS). The Lumenal segment spans residues 49–561 (SRHQPHQDHT…EFVQMCNFGL (513 aa)). 4 N-linked (GlcNAc...) asparagine glycosylation sites follow: Asn-124, Asn-320, Asn-346, and Asn-426.

This sequence belongs to the glycosyltransferase 8 family. In terms of tissue distribution, expressed in roots, inflorescences, siliques, leaves and stems.

The protein localises to the golgi apparatus membrane. It participates in glycan metabolism; pectin biosynthesis. Its function is as follows. May be involved in pectin synthesis. The sequence is that of Probable galacturonosyltransferase 9 (GAUT9) from Arabidopsis thaliana (Mouse-ear cress).